Consider the following 118-residue polypeptide: Large ribosomal subunit protein uL18 (118 aa).

It belongs to the universal ribosomal protein uL18 family. As to quaternary structure, part of the 50S ribosomal subunit; part of the 5S rRNA/L5/L18/L25 subcomplex. Contacts the 5S and 23S rRNAs.

In terms of biological role, this is one of the proteins that bind and probably mediate the attachment of the 5S RNA into the large ribosomal subunit, where it forms part of the central protuberance. This chain is Large ribosomal subunit protein uL18, found in Cupriavidus pinatubonensis (strain JMP 134 / LMG 1197) (Cupriavidus necator (strain JMP 134)).